A 982-amino-acid chain; its full sequence is Glutamate [NMDA] receptor subunit 1 (982 aa).

The N-terminal stretch at 1 to 16 is a signal peptide; sequence MAFAVWFLSTFVIVAA. Topologically, residues 17–561 are extracellular; the sequence is QRHMALEHEG…TLVSFLQPFS (545 aa). N-linked (GlcNAc...) asparagine glycans are attached at residues N247, N303, N334, N386, N443, N470, and N490. Residues 518 to 520 and R525 each bind glycine; that span reads PLT. A helical transmembrane segment spans residues 562 to 582; sequence NTLWILVMVSVHVVALVLYLL. Topologically, residues 583 to 639 are cytoplasmic; sequence DRFSPFGRFKLSHSDSNEEKALNLSSAVWFAWGVLLNSGIGEGTPRSFSARVLGMVW. A helical membrane pass occupies residues 640–660; it reads AGFAMIIVASYTANLAAFLVL. The Extracellular segment spans residues 661–819; that stretch reads ERPKTKLSGI…KTPNTLGLKN (159 aa). N681 carries an N-linked (GlcNAc...) asparagine glycan. Glycine-binding residues include S691 and D735. Residues 820–840 form a helical membrane-spanning segment; sequence MAGVFILVGVGIAGGVGLIII. At 841 to 982 the chain is on the cytoplasmic side; that stretch reads EVIYKKHQVK…YTSDVSHLVV (142 aa). Residues 934 to 982 form a disordered region; it reads EIGKPGQSPKVIGGPPHPMLGKTRPQAQQNLLPPRYSPGYTSDVSHLVV. A compositionally biased stretch (polar residues) spans 972–982; sequence GYTSDVSHLVV.

Belongs to the glutamate-gated ion channel (TC 1.A.10.1) family. As to quaternary structure, forms a heteromeric NMDA channel with Nmdar2.

It is found in the cell membrane. It localises to the postsynaptic cell membrane. The protein localises to the postsynaptic density. Its function is as follows. NMDA receptor subtype of glutamate-gated ion channels with high calcium permeability and voltage-dependent sensitivity to magnesium. Mediated by glycine. This protein plays a key role in synaptic plasticity, synaptogenesis, excitotoxicity, memory acquisition and learning. It mediates neuronal functions in glutamate neurotransmission. Is involved in the cell surface targeting of NMDA receptors. Plays a role in associative learning and in long-term memory consolidation. This chain is Glutamate [NMDA] receptor subunit 1, found in Drosophila willistoni (Fruit fly).